Reading from the N-terminus, the 82-residue chain is Diptericin-A (82 aa).

Disordered stretches follow at residues 1-32 and 45-69; these read DEKPKLILPTPAPPNLPQLVGGGGGNRKDGFG and DNGGHSIGVSPGYSQHLPGPYGNSR. Phe-82 carries the post-translational modification Phenylalanine amide.

It belongs to the attacin/sarcotoxin-2 family.

It localises to the secreted. Its function is as follows. Antimicrobial peptide required to resist Gram-negative bacterial infections, regulated by Dredd. The sequence is that of Diptericin-A from Protophormia terraenovae (Northern blowfly).